We begin with the raw amino-acid sequence, 132 residues long: Small ribosomal subunit protein uS8 (132 aa).

This sequence belongs to the universal ribosomal protein uS8 family. In terms of assembly, part of the 30S ribosomal subunit. Contacts proteins S5 and S12.

One of the primary rRNA binding proteins, it binds directly to 16S rRNA central domain where it helps coordinate assembly of the platform of the 30S subunit. The protein is Small ribosomal subunit protein uS8 of Francisella tularensis subsp. novicida (strain U112).